The following is a 102-amino-acid chain: Peptide chaperone MftB (102 aa).

This sequence belongs to the peptide chaperone MftB family.

Peptide chaperone involved in the biosynthesis of the enzyme cofactor mycofactocin (MFT). Binds MftA and MftC with high affinity, and is essential for MftC activity on MftA, likely via the formation of a ternary complex. Is required for the in vivo ethanol assimilation in M.smegmatis. In Mycolicibacterium smegmatis (strain ATCC 700084 / mc(2)155) (Mycobacterium smegmatis), this protein is Peptide chaperone MftB.